We begin with the raw amino-acid sequence, 330 residues long: Complement factor H-related protein 1 (330 aa).

Residues 1–18 (MWLLVSVILISRISSVGG) form the signal peptide. Sushi domains are found at residues 22–84 (FCDF…PKCL), 85–142 (RLCF…KCRS), 145–203 (TSCV…QCKD), 206–264 (GKCG…KCLH), and 273–329 (MENY…TCAK). 10 disulfides stabilise this stretch: cysteine 23–cysteine 72, cysteine 55–cysteine 83, cysteine 87–cysteine 129, cysteine 114–cysteine 140, cysteine 147–cysteine 190, cysteine 176–cysteine 201, cysteine 208–cysteine 251, cysteine 237–cysteine 262, cysteine 266–cysteine 317, and cysteine 300–cysteine 327. A glycan (N-linked (GlcNAc...) asparagine) is linked at asparagine 126. N-linked (GlcNAc...) asparagine glycosylation is present at asparagine 194.

Head-to-tail homodimer and heterodimer with CFHR2 or CFHR5. In terms of assembly, (Microbial infection) Interacts with C.albicans GPD2; the interaction is direct and leads to the degradation of C3. In terms of processing, N-glycosylated. Two forms are observed; one with a single side chain and the other with two. As to expression, expressed by the liver and secreted in plasma.

It localises to the secreted. Functionally, involved in complement regulation. The dimerized forms have avidity for tissue-bound complement fragments and efficiently compete with the physiological complement inhibitor CFH. Can associate with lipoproteins and may play a role in lipid metabolism. The polypeptide is Complement factor H-related protein 1 (CFHR1) (Homo sapiens (Human)).